The primary structure comprises 207 residues: Thymidylate kinase (207 aa).

10-17 (GIEGSGKS) is a binding site for ATP.

It belongs to the thymidylate kinase family.

It carries out the reaction dTMP + ATP = dTDP + ADP. Its function is as follows. Phosphorylation of dTMP to form dTDP in both de novo and salvage pathways of dTTP synthesis. The polypeptide is Thymidylate kinase (Halothermothrix orenii (strain H 168 / OCM 544 / DSM 9562)).